Here is a 652-residue protein sequence, read N- to C-terminus: Carboxypeptidase S1 homolog A (652 aa).

Positions 1–19 (MRLAASIAVALPVIGAASA) are cleaved as a signal peptide. An intrachain disulfide couples cysteine 50 to cysteine 121. Asparagine 77, asparagine 132, asparagine 161, asparagine 168, asparagine 184, and asparagine 202 each carry an N-linked (GlcNAc...) asparagine glycan. Residue serine 238 is part of the active site. Residues asparagine 260, asparagine 299, asparagine 347, and asparagine 410 are each glycosylated (N-linked (GlcNAc...) asparagine). Intrachain disulfides connect cysteine 325–cysteine 361 and cysteine 332–cysteine 354. The active site involves aspartate 458. Cysteine 461 is a substrate binding site. Asparagine 474, asparagine 492, and asparagine 505 each carry an N-linked (GlcNAc...) asparagine glycan. Histidine 516 is an active-site residue. Glutamate 517 is a binding site for substrate. Asparagine 594 carries an N-linked (GlcNAc...) asparagine glycan. The disordered stretch occupies residues 608–628 (AASKGNPPPTTTSSPTASPTA). Low complexity predominate over residues 618-628 (TTSSPTASPTA). A lipid anchor (GPI-anchor amidated glycine) is attached at glycine 629. Residues 630 to 652 (SAMLKAPVAMLAISALTVLAFYL) constitute a propeptide, removed in mature form.

This sequence belongs to the peptidase S10 family.

It localises to the cell membrane. The enzyme catalyses Preferential release of a C-terminal arginine or lysine residue.. Functionally, extracellular serine carboxypeptidase that contributes to pathogenicity. The sequence is that of Carboxypeptidase S1 homolog A (SCPA) from Arthroderma benhamiae (strain ATCC MYA-4681 / CBS 112371) (Trichophyton mentagrophytes).